We begin with the raw amino-acid sequence, 348 residues long: Lipoyl synthase (348 aa).

Residues cysteine 55, cysteine 60, cysteine 66, cysteine 81, cysteine 85, cysteine 88, and serine 292 each contribute to the [4Fe-4S] cluster site. Residues 67–281 (WESREATFLI…SDEAYEIGFA (215 aa)) enclose the Radical SAM core domain.

It belongs to the radical SAM superfamily. Lipoyl synthase family. The cofactor is [4Fe-4S] cluster.

The protein resides in the cytoplasm. The enzyme catalyses [[Fe-S] cluster scaffold protein carrying a second [4Fe-4S](2+) cluster] + N(6)-octanoyl-L-lysyl-[protein] + 2 oxidized [2Fe-2S]-[ferredoxin] + 2 S-adenosyl-L-methionine + 4 H(+) = [[Fe-S] cluster scaffold protein] + N(6)-[(R)-dihydrolipoyl]-L-lysyl-[protein] + 4 Fe(3+) + 2 hydrogen sulfide + 2 5'-deoxyadenosine + 2 L-methionine + 2 reduced [2Fe-2S]-[ferredoxin]. It participates in protein modification; protein lipoylation via endogenous pathway; protein N(6)-(lipoyl)lysine from octanoyl-[acyl-carrier-protein]: step 2/2. Its function is as follows. Catalyzes the radical-mediated insertion of two sulfur atoms into the C-6 and C-8 positions of the octanoyl moiety bound to the lipoyl domains of lipoate-dependent enzymes, thereby converting the octanoylated domains into lipoylated derivatives. The chain is Lipoyl synthase from Corynebacterium efficiens (strain DSM 44549 / YS-314 / AJ 12310 / JCM 11189 / NBRC 100395).